We begin with the raw amino-acid sequence, 127 residues long: uncharacterized protein (127 aa).

This is an uncharacterized protein from Archaeoglobus fulgidus (strain ATCC 49558 / DSM 4304 / JCM 9628 / NBRC 100126 / VC-16).